A 100-amino-acid chain; its full sequence is Guanine nucleotide-binding protein subunit gamma 2 (100 aa).

Met1 is modified (N-acetylmethionine). A coiled-coil region spans residues 19–55 (TRGKHRIQAELKRLEQEARFLEEELEQLEKMDNASAS). The 80-residue stretch at 21-100 (GKHRIQAELK…EAKRCGCSIL (80 aa)) folds into the G protein gamma domain. The tract at residues 90-96 (KEAKRCG) is regulates lipidation and cell membrane subcellular localization. A lipid anchor (S-palmitoyl cysteine) is attached at Cys95. A Cysteine methyl ester modification is found at Cys97. A lipid anchor (S-farnesyl cysteine) is attached at Cys97. Positions 98 to 100 (SIL) are cleaved as a propeptide — removed in mature form.

As to quaternary structure, g proteins are composed of 3 units, alpha, beta and gamma. GPG1 interacts with the beta subunit GB1. The dimer GB1-GG2 interacts with NDL1, NDL2 and NDL3. Binds to NUDT7. Mostly expressed in roots (excluded from the stele), seedlings (especially at the hypocotyl/root junction), floral stems, floral buds, flowers and siliques, and, to a lower extent, in leaves (restricted to guard cells). Also present in hydathods.

The protein localises to the cell membrane. Functionally, guanine nucleotide-binding proteins (G proteins) are involved as a modulator or transducer in various transmembrane signaling systems. The beta and gamma chains are required for the GTPase activity, for replacement of GDP by GTP, and for G protein-effector interaction. Involved in the abscisic acid (ABA) and ethylene signaling pathways. Regulates basipetal transport of auxin (IAA) in roots and hypocotyls, and thus modulates root architecture (e.g. lateral root formation). The heterotrimeric G-protein controls defense responses to necrotrophic and vascular fungi probably by modulating cell wall-related genes expression; involved in resistance to Plectosphaerella cucumerina. The protein is Guanine nucleotide-binding protein subunit gamma 2 (GG2) of Arabidopsis thaliana (Mouse-ear cress).